The sequence spans 437 residues: Putative ankyrin repeat protein FPV014 (437 aa).

ANK repeat units follow at residues 32 to 61, 65 to 94, 99 to 128, 131 to 160, 164 to 195, 197 to 226, and 230 to 259; these read YGCS…NPDL, STPT…DPDN, ESRT…DAED, RFNC…RINS, GSVY…DVED, LSFS…SVDV, and CGRT…DTSV.

The chain is Putative ankyrin repeat protein FPV014 from Fowlpox virus (strain NVSL) (FPV).